Reading from the N-terminus, the 329-residue chain is DNA-directed RNA polymerase subunit alpha (329 aa).

Residues 1–234 (MQGSVTEFLK…EQLDAFVELR (234 aa)) form an alpha N-terminal domain (alpha-NTD) region. The alpha C-terminal domain (alpha-CTD) stretch occupies residues 248–329 (FDPILLRPVD…WPPASLADDL (82 aa)).

It belongs to the RNA polymerase alpha chain family. Homodimer. The RNAP catalytic core consists of 2 alpha, 1 beta, 1 beta' and 1 omega subunit. When a sigma factor is associated with the core the holoenzyme is formed, which can initiate transcription.

It catalyses the reaction RNA(n) + a ribonucleoside 5'-triphosphate = RNA(n+1) + diphosphate. Functionally, DNA-dependent RNA polymerase catalyzes the transcription of DNA into RNA using the four ribonucleoside triphosphates as substrates. In Shewanella putrefaciens (strain CN-32 / ATCC BAA-453), this protein is DNA-directed RNA polymerase subunit alpha.